The primary structure comprises 75 residues: Alpha-amylase inhibitor Paim-2 (75 aa).

2 cysteine pairs are disulfide-bonded: cysteine 10/cysteine 26 and cysteine 44/cysteine 72.

Functionally, inhibits mammalian alpha-amylases specifically but has no action on plant and microbial alpha-amylases. The chain is Alpha-amylase inhibitor Paim-2 from Streptomyces olivaceoviridis (Streptomyces corchorusii).